A 150-amino-acid chain; its full sequence is Large ribosomal subunit protein bL9 (150 aa).

Belongs to the bacterial ribosomal protein bL9 family.

Functionally, binds to the 23S rRNA. This is Large ribosomal subunit protein bL9 from Corynebacterium efficiens (strain DSM 44549 / YS-314 / AJ 12310 / JCM 11189 / NBRC 100395).